A 1865-amino-acid chain; its full sequence is MTRWVPTKREEKYGVAFYNYDARGADELSLQIGDTVHILETYEGWYRGYTLRKKSKKGIFPASYIHLKEAIVEGKGQHETVIPGDLPLIQEVTTTLREWSTIWRQLYVQDNREMFRSVRHMIYDLIEWRSQILSGTLPQDELKELKKKVTAKIDYGNRILDLDLVVRDEDGNILDPELTSTISLFRAHEIASKQVEERLQEEKSQKQNIDINRQAKFAATPSLALFVNLKNVVCKIGEDAEVLMSLYDPVESKFISENYLVRWSSSGLPKDIDRLHNLRAVFTDLGSKDLKREKISFVCQIVRVGRMELRDNNTRKLTSGLRRPFGVAVMDVTDIINGKVDDEDKQHFIPFQPVAGENDFLQTVINKVIAAKEVNHKGQGLWVTLKLLPGDIHQIRKEFPHLVDRTTAVARKTGFPEIIMPGDVRNDIYVTLVQGDFDKGSKTTAKNVEVTVSVYDEDGKRLEHVIFPGAGDEAISEYKSVIYYQVKQPRWFETVKVAIPIEDVNRSHLRFTFRHRSSQDSKDKSEKIFALAFVKLMRYDGTTLRDGEHDLIVYKAEAKKLEDAATYLSLPSTKAELEEKGHSATGKSMQSLGSCTISKDSFQISTLVCSTKLTQNVDLLGLLKWRSNTSLLQQNLRQLMKVDGGEVVKFLQDTLDALFNIMMENSESETFDTLVFDALVFIIGLIADRKFQHFNPVLETYIKKHFSATLAYTKLTKVLKNYVDGAEKPGVNEQLYKAMKALESIFKFIVRSRILFNQLYENKGEADFVESLLQLFRSINDMMSSMSDQTVRVKGAALKYLPTIVNDVKLVFDPKELSKMFTEFILNVPMGLLTIQKLYCLIEIVHSDLFTQHDCREILLPMMTDQLKYHLERQEDLEACCQLLSHILEVLYRKDVGPTQRHVQIIMEKLLRTVNRTVISMGRDSELIGNFVACMTAILRQMEDYHYAHLIKTFGKMRTDVVDFLMETFIMFKNLIGKNVYPFDWVIMNMVQNKVFLRAINQYADMLNKKFLDQANFELQLWNNYFHLAVAFLTQESLQLENFSSAKRAKILNKYGDMRRQIGFEIRDMWYNLGQHKIKFIPEMVGPILEMTLIPETELRKATIPIFFDMMQCEFHSTRSFQMFENEIITKLDHEVEGGRGDEQYKVLFDKILLEHCRKHKYLAKTGETFVKLVVRLMERLLDYRTIMHDENKENRMSCTVNVLNFYKEIEREEMYIRYLYKLCDLHKECDNYTEAAYTLLLHAKLLKWSEDVCVAHLTQRDGYQATTQGQLKEQLYQEIIHYFDKGKMWEEAIALGKELAEQYENEMFDYEQLSELLKKQAQFYENIVKVIRPKPDYFAVGYYGQGFPTFLRGKVFIYRGKEYERREDFEARLLTQFPNAEKMKTTSPPGDDIKNSPGQYIQCFTVKPKLDLPPKFHRPVSEQIVSFYRVNEVQRFEYSRPIRKGEKNPDNEFANMWIERTIYTTAYKLPGILRWFEVKSVFMVEISPLENAIETMQLTNDKINSMVQQHLDDPSLPINPLSMLLNGIVDPAVMGGFANYEKAFFTDRYLQEHPEAHEKIEKLKDLIAWQIPFLAEGIRIHGDKVTEALRPFHERMEACFKQLKEKVEKEYGVRIMPSSLDDRRGSRPRSMVRSFTMPSSSRPLSVASVSSLSSDSTPSRPGSDGFALEPLLPKKMHSRSQDKLDKDDLEKEKKDKKKEKRNSKHQEIFEKEFKPTDISLQQSEAVILSETISPLRPQRPKSQVMNVIGSERRFSVSPSSPSSQQTPPPVTPRAKLSFSMQSSLELNGMTGADVADVPPPLPLKGSVADYGNLMENQDLLGSPTPPPPPPHQRHLPPPLPSKTPPPPPPKTTRKQASVDSGIVQ.

One can recognise an SH3 domain in the interval 9–70; the sequence is REEKYGVAFY…PASYIHLKEA (62 aa). In terms of domain architecture, C2 DOCK-type spans 425 to 609; the sequence is RNDIYVTLVQ…DSFQISTLVC (185 aa). Residues 1207-1617 form the DOCKER domain; it reads YKEIEREEMY…VEKEYGVRIM (411 aa). Disordered stretches follow at residues 1619 to 1716 and 1732 to 1865; these read SSLD…EFKP and TISP…GIVQ. The span at 1639-1666 shows a compositional bias: low complexity; sequence PSSSRPLSVASVSSLSSDSTPSRPGSDG. Over residues 1680–1694 the composition is skewed to basic and acidic residues; sequence RSQDKLDKDDLEKEK. The residue at position 1681 (serine 1681) is a Phosphoserine. Residues 1687 to 1695 form a phosphoinositide-binding region; it reads KDDLEKEKK. Residues 1695–1704 are compositionally biased toward basic residues; that stretch reads KDKKKEKRNS. A compositionally biased stretch (basic and acidic residues) spans 1705 to 1716; the sequence is KHQEIFEKEFKP. A phosphoserine mark is found at serine 1743, serine 1751, serine 1756, serine 1761, and serine 1764. The span at 1756–1766 shows a compositional bias: low complexity; it reads SVSPSSPSSQQ. Phosphothreonine occurs at positions 1767 and 1772. Positions 1793-1819 are interaction with NCK2 second and third SH3 domain (minor); the sequence is ADVADVPPPLPLKGSVADYGNLMENQD. Residues 1799 to 1805 carry the SH3-binding; interaction with CRK motif; it reads PPPLPLK. The tract at residues 1820 to 1836 is interaction with NCK2 third SH3 domain (major); the sequence is LLGSPTPPPPPPHQRHL. Residues 1824 to 1851 are compositionally biased toward pro residues; sequence PTPPPPPPHQRHLPPPLPSKTPPPPPPK. An interaction with NCK2 (minor) region spans residues 1837–1852; sequence PPPLPSKTPPPPPPKT. Positions 1838-1843 match the SH3-binding; interaction with CRK motif; it reads PPLPSK. Over residues 1855 to 1865 the composition is skewed to polar residues; that stretch reads KQASVDSGIVQ. The residue at position 1858 (serine 1858) is a Phosphoserine.

The protein belongs to the DOCK family. In terms of assembly, interacts with the SH3 domains of CRK and NCK2 via multiple sites. Interacts with nucleotide-free RAC1 via its DOCKER domain. Interacts with ELMO1, ELMO2 and probably ELMO3 via its SH3 domain. Interacts with ADGRB1. Identified in a complex with AUTS2 and ELMO2. In terms of tissue distribution, highly expressed in placenta, lung, kidney, pancreas and ovary. Expressed at intermediate level in thymus, testes and colon.

The protein resides in the cytoplasm. Its subcellular location is the membrane. Functionally, involved in cytoskeletal rearrangements required for phagocytosis of apoptotic cells and cell motility. Along with DOCK1, mediates CRK/CRKL regulation of epithelial and endothelial cell spreading and migration on type IV collagen. Functions as a guanine nucleotide exchange factor (GEF), which activates Rac Rho small GTPases by exchanging bound GDP for free GTP. Its GEF activity may be enhanced by ELMO1. The chain is Dedicator of cytokinesis protein 1 (DOCK1) from Homo sapiens (Human).